The following is a 425-amino-acid chain: Adenylosuccinate synthetase (425 aa).

GTP contacts are provided by residues 12–18 (GDEGKGK) and 40–42 (GHT). The active-site Proton acceptor is the Asp-13. Positions 13 and 40 each coordinate Mg(2+). Residues 13-16 (DEGK), 38-41 (NAGH), Thr-126, Arg-140, Gln-221, Thr-236, and Arg-300 contribute to the IMP site. The active-site Proton donor is the His-41. 296–302 (ATTGRPR) is a binding site for substrate. GTP contacts are provided by residues Arg-302, 328–330 (KLD), and 410–412 (STG).

This sequence belongs to the adenylosuccinate synthetase family. Homodimer. Mg(2+) is required as a cofactor.

It localises to the cytoplasm. The catalysed reaction is IMP + L-aspartate + GTP = N(6)-(1,2-dicarboxyethyl)-AMP + GDP + phosphate + 2 H(+). It functions in the pathway purine metabolism; AMP biosynthesis via de novo pathway; AMP from IMP: step 1/2. Its function is as follows. Plays an important role in the de novo pathway of purine nucleotide biosynthesis. Catalyzes the first committed step in the biosynthesis of AMP from IMP. This chain is Adenylosuccinate synthetase, found in Thermodesulfovibrio yellowstonii (strain ATCC 51303 / DSM 11347 / YP87).